Here is a 245-residue protein sequence, read N- to C-terminus: Probable phosphatase YpAngola_A2446 (245 aa).

Residues His-7, His-9, His-15, His-40, Glu-73, His-101, His-131, Asp-192, and His-194 each contribute to the Zn(2+) site.

It belongs to the PHP family. As to quaternary structure, homotrimer. The cofactor is Zn(2+).

The protein is Probable phosphatase YpAngola_A2446 of Yersinia pestis bv. Antiqua (strain Angola).